We begin with the raw amino-acid sequence, 381 residues long: Class E basic helix-loop-helix protein 22 (381 aa).

Disordered regions lie at residues 30-94, 135-154, and 188-242; these read RLEA…GGGG, RGSVAESSGGEQSPDDDSDG, and HLHG…EQKA. Residues 82–94 are compositionally biased toward gly residues; that stretch reads GGGGGSAGSGGGG. The segment covering 198 to 225 has biased composition (gly residues); the sequence is GGLGGGGGGGSSSGSSGGGGGSGSGSGG. Residues 242–296 enclose the bHLH domain; sequence ALRLNINARERRRMHDLNDALDELRAVIPYAHSPSVRKLSKIATLLLAKNYILMQ.

As to quaternary structure, interacts with PRDM8. As to expression, brain-specific, with the highest expression in the cerebellum.

It localises to the nucleus. Functionally, inhibits DNA binding of TCF3/E47 homodimers and TCF3 (E47)/NEUROD1 heterodimers and acts as a strong repressor of Neurod1 and Myod-responsive genes, probably by heterodimerization with class a basic helix-loop-helix factors. Despite the presence of an intact basic domain, does not bind to DNA. In the brain, may function as an area-specific transcription factor that regulates the postmitotic acquisition of area identities and elucidate the genetic hierarchy between progenitors and postmitotic neurons driving neocortical arealization. May be required for the survival of a specific population of inhibitory neurons in the superficial laminae of the spinal cord dorsal horn that may regulate pruritis. Seems to play a crucial role in the retinogenesis, in the specification of amacrine and bipolar subtypes. Forms with PRDM8 a transcriptional repressor complex controlling genes involved in neural development and neuronal differentiation. The sequence is that of Class E basic helix-loop-helix protein 22 (BHLHE22) from Homo sapiens (Human).